A 73-amino-acid polypeptide reads, in one-letter code: Arabinogalactan protein 16 (73 aa).

Positions 1-26 (MASRNSVTGFALFSFVFAVILSLAGA) are cleaved as a signal peptide. Gln27 carries the pyrrolidone carboxylic acid modification. Residues Pro31, Pro33, and Pro35 each carry the 4-hydroxyproline modification. 3 O-linked (Ara...) hydroxyproline glycosylation sites follow: Pro31, Pro33, and Pro35. Ser37 is lipidated: GPI-anchor amidated serine. Positions 38–73 (DGTSIDQGIAYLLMVVALVLTYLIHPLDASSSYSFF) are cleaved as a propeptide — removed in mature form.

The protein belongs to the AG-peptide AGP family. Contains 4-hydroxyproline; hydroxylated on Pro-31, Pro-33 and Pro-35. In terms of processing, O-glycosylated on hydroxyprolines; noncontiguous hydroxylproline residues are glycosylated with arabinogalactan. In terms of tissue distribution, predominantly expressed in flowers.

It localises to the cell membrane. Its function is as follows. Proteoglycan that seems to be implicated in diverse developmental roles such as differentiation, cell-cell recognition, embryogenesis and programmed cell death. In Arabidopsis thaliana (Mouse-ear cress), this protein is Arabinogalactan protein 16.